Reading from the N-terminus, the 347-residue chain is Quinolinate synthase (347 aa).

Residues His47 and Ser68 each coordinate iminosuccinate. Cys113 contacts [4Fe-4S] cluster. Residues 139–141 (YAN) and Ser156 contribute to the iminosuccinate site. A [4Fe-4S] cluster-binding site is contributed by Cys200. Iminosuccinate is bound by residues 226–228 (HPE) and Thr243. Cys297 contributes to the [4Fe-4S] cluster binding site.

The protein belongs to the quinolinate synthase family. Type 1 subfamily. [4Fe-4S] cluster serves as cofactor.

The protein localises to the cytoplasm. It catalyses the reaction iminosuccinate + dihydroxyacetone phosphate = quinolinate + phosphate + 2 H2O + H(+). The protein operates within cofactor biosynthesis; NAD(+) biosynthesis; quinolinate from iminoaspartate: step 1/1. In terms of biological role, catalyzes the condensation of iminoaspartate with dihydroxyacetone phosphate to form quinolinate. This chain is Quinolinate synthase, found in Salmonella paratyphi A (strain ATCC 9150 / SARB42).